The primary structure comprises 488 residues: E3 ubiquitin-protein ligase XIAP (488 aa).

3 BIR repeats span residues 40–105 (RLAS…KFIN), 176–241 (RLQT…YFVL), and 266–329 (RLET…QFLI). Zn(2+) contacts are provided by cysteine 298, cysteine 301, histidine 318, and cysteine 325. Residues 441-476 (CKVCMDRRITIVFIPCGHLVACAVCADVLDKCPICC) form an RING-type zinc finger.

It belongs to the IAP family. Monomer, and homodimer. Post-translationally, degraded in a 2-step mechanism; a caspase-independent first step and a caspase-dependent second step. Stabilized indirectly by MAPK, which acts to delay caspase activation, rather than directly phosphorylating xiap.

It is found in the cytoplasm. The protein localises to the nucleus. The catalysed reaction is S-ubiquitinyl-[E2 ubiquitin-conjugating enzyme]-L-cysteine + [acceptor protein]-L-lysine = [E2 ubiquitin-conjugating enzyme]-L-cysteine + N(6)-ubiquitinyl-[acceptor protein]-L-lysine.. Multi-functional protein which regulates not only caspases and apoptosis, but also acts as an E3 ubiquitin-protein ligase mediating ubiquitination and subsequent proteasomal degradation of its target proteins. Acts as a direct caspase inhibitor. E3 ubiquitin-protein ligase that acts as an important regulator of innate immunity by mediating 'Lys-63'-linked polyubiquitination of ripk2 downstream of NOD1 and NOD2, thereby transforming ripk2 into a scaffolding protein for downstream effectors, ultimately leading to activation of the NF-kappa-B and MAP kinases signaling. A key apoptotic suppressor in eggs. Acts as a positive regulator of Wnt signaling. This chain is E3 ubiquitin-protein ligase XIAP (xiap), found in Xenopus laevis (African clawed frog).